The primary structure comprises 213 residues: Phosphate-specific transport system accessory protein PhoU homolog 2 (213 aa).

Belongs to the PhoU family. As to quaternary structure, homodimer.

The protein resides in the cytoplasm. Plays a role in the regulation of phosphate uptake. In this role, it may bind, possibly as a chaperone, to PhoR, PhoP or a PhoR-PhoP complex to promote dephosphorylation of phospho-PhoP, or inhibit formation of the PhoR-PhoP transitory complex. The sequence is that of Phosphate-specific transport system accessory protein PhoU homolog 2 (phoU2) from Mycobacterium bovis (strain ATCC BAA-935 / AF2122/97).